A 246-amino-acid polypeptide reads, in one-letter code: Lipoprotein-releasing system ATP-binding protein LolD 1 (246 aa).

In terms of domain architecture, ABC transporter spans 6-244 (LKLERIRKDL…ASVTNEAASL (239 aa)). Residue 43–50 (GPSGSGKS) coordinates ATP.

This sequence belongs to the ABC transporter superfamily. Lipoprotein translocase (TC 3.A.1.125) family. In terms of assembly, the complex is composed of two ATP-binding proteins (LolD) and two transmembrane proteins (LolC and LolE).

The protein resides in the cell inner membrane. Functionally, part of the ABC transporter complex LolCDE involved in the translocation of mature outer membrane-directed lipoproteins, from the inner membrane to the periplasmic chaperone, LolA. Responsible for the formation of the LolA-lipoprotein complex in an ATP-dependent manner. The polypeptide is Lipoprotein-releasing system ATP-binding protein LolD 1 (Chlorobium chlorochromatii (strain CaD3)).